We begin with the raw amino-acid sequence, 150 residues long: FAD synthase (150 aa).

ATP is bound by residues 10–11 (VF), 15–18 (HPGH), Asp97, and Tyr124.

It belongs to the archaeal FAD synthase family. In terms of assembly, homodimer. A divalent metal cation is required as a cofactor.

It catalyses the reaction FMN + ATP + H(+) = FAD + diphosphate. It participates in cofactor biosynthesis; FAD biosynthesis; FAD from FMN: step 1/1. Its function is as follows. Catalyzes the transfer of the AMP portion of ATP to flavin mononucleotide (FMN) to produce flavin adenine dinucleotide (FAD) coenzyme. The polypeptide is FAD synthase (Methanopyrus kandleri (strain AV19 / DSM 6324 / JCM 9639 / NBRC 100938)).